The sequence spans 189 residues: Elongation factor P (189 aa).

The protein belongs to the elongation factor P family.

It is found in the cytoplasm. It functions in the pathway protein biosynthesis; polypeptide chain elongation. Its function is as follows. Involved in peptide bond synthesis. Stimulates efficient translation and peptide-bond synthesis on native or reconstituted 70S ribosomes in vitro. Probably functions indirectly by altering the affinity of the ribosome for aminoacyl-tRNA, thus increasing their reactivity as acceptors for peptidyl transferase. The polypeptide is Elongation factor P (Rhizobium rhizogenes (strain K84 / ATCC BAA-868) (Agrobacterium radiobacter)).